The sequence spans 1840 residues: Neurexin 1 (1840 aa).

The segment at 1 to 50 (MKAPHSATYQDNYADAAMTARTRPSMDMDQQRNRNQAELRLLPAQRTSTS) is disordered. At 1–1696 (MKAPHSATYQ…NSIEEERTAM (1696 aa)) the chain is on the extracellular side. A compositionally biased stretch (basic and acidic residues) spans 24–37 (PSMDMDQQRNRNQA). Residues 104 to 289 (GFQLDGSQNS…RDIKCGDVPC (186 aa)) enclose the Laminin G-like 1 domain. The EGF-like 1 domain maps to 309–347 (TTDACERNDPCQHGGICISTDSGPICECRNLEYDGQYCE). Cystine bridges form between C313–C325, C319–C334, C336–C346, C511–C547, C710–C739, C746–C757, C751–C766, and C768–C778. 2 consecutive Laminin G-like domains span residues 352-547 (PSEA…EYQC) and 554-739 (DPVT…KPSC). Residues 742–779 (QANVCNGNPCLNGGTCLEGWNRPICDCSATLYGGPTCG) form the EGF-like 2 domain. Laminin G-like domains are found at residues 784 to 964 (TLAF…LPSA) and 982 to 1158 (HAAT…VSGC). 4 disulfides stabilise this stretch: C1130-C1158, C1164-C1175, C1169-C1184, and C1186-C1196. Residues 1160 to 1197 (GPTKCSQNACANRGNCVQQWNAYACECDMTSYTGPTCY) enclose the EGF-like 3 domain. The region spanning 1201 to 1416 (IAYEFGNNKG…LIFSGAGSGC (216 aa)) is the Laminin G-like 6 domain. The disordered stretch occupies residues 1411-1651 (GAGSGCRGDD…DEHHPLPPLP (241 aa)). A compositionally biased stretch (low complexity) spans 1447–1472 (QTTTSQQGNSLSTGGSSSGGVITNGT). Polar residues predominate over residues 1491 to 1527 (TTEQFTSTSTARGSESNNEMVTITTTGRSDVTTEQHQ). Over residues 1528-1600 (GSSSSSSSGS…TTTTTTTTQA (73 aa)) the composition is skewed to low complexity. Residues 1632-1646 (RNDHDRMQLPDEHHP) are compositionally biased toward basic and acidic residues. The chain crosses the membrane as a helical span at residues 1697-1717 (IIGIVAGILIAVVLVILLVLW). Over 1718–1840 (LKSNGDRGYK…DSKDVKEWYV (123 aa)) the chain is Cytoplasmic. The disordered stretch occupies residues 1737-1840 (GSHNPNAALL…DSKDVKEWYV (104 aa)). A compositionally biased stretch (polar residues) spans 1747–1757 (GNTSTNGSYHQ). The span at 1774–1787 (QQQHHAQQQMHNGH) shows a compositional bias: low complexity. Gly residues predominate over residues 1788 to 1813 (NGNGNGGGGGGGGMMSSGSGSLGYGS). Positions 1831 and 1834 each coordinate Zn(2+). The span at 1831–1840 (DSKDVKEWYV) shows a compositional bias: basic and acidic residues. The PDZ domain binding motif lies at 1837-1840 (EWYV).

The protein belongs to the neurexin family. In terms of assembly, interacts (via C-terminal PDZ binding motif) with CASK (via PDZ domain). Interacts (via cytoplasmic domain) with apolpp/ApoLI; the interaction supports apolpp/ApoLI protein stability. Interact (via cytoplasmic domain) with Spn/Spinophilin. Interacts with RhoGAP100F/Syd-1 (via PDZ domain); RhoGAP100F/Syd-1 may recruit Nrx-1 to the presynaptic active zone. As to expression, expressed in brain, with expression in medulla, lamina, lobula, lobula plate, mushroom body and antennal lobe, and in retina (at protein level). Expressed in rabdomere of photoreceptor cells (at protein level).

It localises to the synaptic cell membrane. The protein resides in the presynaptic cell membrane. It is found in the postsynaptic cell membrane. Neuronal cell adhesion protein involved in synapse formation, development of synaptic active zones, synaptic regulation and visual function. Plays a role in cell adhesion between the pre- and the postsynaptic cell. Required for proper proliferation of synaptic boutons during larval development, a process necessary for coordinated matching of pre-and postsynaptic compartments. Promotes presynaptic active zone formation and neurotransmitter release. Spn/Spinophilin fine-tunes nrx-1/nlg1 signaling at the pre-synapse to control active zone number and functionality and thereby optimizing action potential-induced exocytosis. Required for synapse formation in central nervous system. By regulating synapse formation, may play a role in larval associative learning. Together with RhoGAP100F/syd-1, controls synapse formation at the neuromuscular junction. Essential for synaptic vesicle cycling, which plays critical roles in neurotransmission at neuromuscular junctions (NMJ). Regulated and restricts formation of glutamate receptor clusters. Mediates retinoid transport and subsequent rhodopsin maturation and may regulate lipoprotein function; thereby playing a role in vision. Regulates sleep, circadian rhythm and synaptic plasticity. Together with CASK, required for locomotion. The protein is Neurexin 1 of Drosophila melanogaster (Fruit fly).